A 622-amino-acid polypeptide reads, in one-letter code: Procollagen galactosyltransferase 1 (622 aa).

The N-terminal stretch at 1–29 (MAAAPRAGRRRGQPLLALLLLLLAPLPPG) is a signal peptide. 3 N-linked (GlcNAc...) asparagine glycosylation sites follow: asparagine 96, asparagine 184, and asparagine 381. A compositionally biased stretch (basic and acidic residues) spans 588–606 (RAKSQKMREQQALSREAKN). Residues 588–622 (RAKSQKMREQQALSREAKNSDVLQSPLDSAARDEL) form a disordered region. The Endoplasmic reticulum retention motif motif lies at 619–622 (RDEL).

The protein belongs to the glycosyltransferase 25 family. In terms of processing, N-glycosylated. As to expression, ubiquitous with higher levels in placenta, heart, lung and spleen.

It localises to the endoplasmic reticulum lumen. The catalysed reaction is (5R)-5-hydroxy-L-lysyl-[collagen] + UDP-alpha-D-galactose = (5R)-5-O-(beta-D-galactosyl)-5-hydroxy-L-lysyl-[collagen] + UDP + H(+). Functionally, beta-galactosyltransferase that transfers beta-galactose to hydroxylysine residues of type I collagen. By acting on collagen glycosylation, facilitates the formation of collagen triple helix. Also involved in the biosynthesis of collagen type IV. This Homo sapiens (Human) protein is Procollagen galactosyltransferase 1 (COLGALT1).